An 83-amino-acid polypeptide reads, in one-letter code: BmKBT-like peptide (83 aa).

The signal sequence occupies residues 1 to 19 (MKAALLLVISTLMLIGVLT). An LCN-type CS-alpha/beta domain is found at 21–81 (KSGYPIQHDG…TWSRETNKCR (61 aa)). 4 disulfide bridges follow: cysteine 31–cysteine 80, cysteine 35–cysteine 54, cysteine 41–cysteine 61, and cysteine 45–cysteine 63. A propeptide (removed by a carboxypeptidase) is located at residue lysine 83.

Belongs to the long (4 C-C) scorpion toxin superfamily. Sodium channel inhibitor family. Beta subfamily. As to expression, expressed by the venom gland.

It is found in the secreted. Sodium channel inhibitor. Possesses potent toxicity in mice but induces only paralysis in cotton bollworm. In Olivierus martensii (Manchurian scorpion), this protein is BmKBT-like peptide.